Consider the following 260-residue polypeptide: Hemin import ATP-binding protein HmuV (260 aa).

The ABC transporter domain occupies 3 to 239 (LHAQQISLSI…QRLSEVYGCD (237 aa)). An ATP-binding site is contributed by 35–42 (GPNGSGKS).

The protein belongs to the ABC transporter superfamily. Heme (hemin) importer (TC 3.A.1.14.5) family. In terms of assembly, the complex is composed of two ATP-binding proteins (HmuV), two transmembrane proteins (HmuU) and a solute-binding protein (HmuT).

The protein localises to the cell inner membrane. Part of the ABC transporter complex HmuTUV involved in hemin import. Responsible for energy coupling to the transport system. The chain is Hemin import ATP-binding protein HmuV from Ruegeria sp. (strain TM1040) (Silicibacter sp.).